The chain runs to 424 residues: L-threonine:uridine-5'-aldehyde transaldolase (424 aa).

The residue at position 235 (Lys235) is an N6-(pyridoxal phosphate)lysine.

It belongs to the SHMT family. The cofactor is pyridoxal 5'-phosphate.

It catalyses the reaction uridine-5'-aldehyde + L-threonine = (5'S,6'S)-C-glycyluridine + acetaldehyde. It participates in antibiotic biosynthesis. Its function is as follows. Transaldolase involved in the biosynthesis of the lipopeptidyl nucleoside antibiotic A-90289. Catalyzes the condensation of L-threonine and uridine-5'-aldehyde to form 5'-C-glycyluridine (GlyU). Forms (5'S,6'S)-GlyU. Has no activity with alternative amino acids, such as glycine or serine. This chain is L-threonine:uridine-5'-aldehyde transaldolase, found in Streptomyces sp.